A 340-amino-acid chain; its full sequence is Heat-inducible transcription repressor HrcA (340 aa).

This sequence belongs to the HrcA family.

In terms of biological role, negative regulator of class I heat shock genes (grpE-dnaK-dnaJ and groELS operons). Prevents heat-shock induction of these operons. This Mycoplasma capricolum subsp. capricolum (strain California kid / ATCC 27343 / NCTC 10154) protein is Heat-inducible transcription repressor HrcA.